Reading from the N-terminus, the 277-residue chain is 3-methyl-2-oxobutanoate hydroxymethyltransferase (277 aa).

Residues Asp-42 and Asp-81 each contribute to the Mg(2+) site. 3-methyl-2-oxobutanoate contacts are provided by residues 42 to 43 (DS), Asp-81, and Lys-110. Residue Glu-112 participates in Mg(2+) binding. The active-site Proton acceptor is Glu-179.

It belongs to the PanB family. In terms of assembly, homodecamer; pentamer of dimers. Requires Mg(2+) as cofactor.

The protein localises to the cytoplasm. It carries out the reaction 3-methyl-2-oxobutanoate + (6R)-5,10-methylene-5,6,7,8-tetrahydrofolate + H2O = 2-dehydropantoate + (6S)-5,6,7,8-tetrahydrofolate. It participates in cofactor biosynthesis; (R)-pantothenate biosynthesis; (R)-pantoate from 3-methyl-2-oxobutanoate: step 1/2. In terms of biological role, catalyzes the reversible reaction in which hydroxymethyl group from 5,10-methylenetetrahydrofolate is transferred onto alpha-ketoisovalerate to form ketopantoate. This Anaplasma marginale (strain St. Maries) protein is 3-methyl-2-oxobutanoate hydroxymethyltransferase.